Consider the following 194-residue polypeptide: Xanthine phosphoribosyltransferase (194 aa).

Residues leucine 20 and asparagine 27 each contribute to the xanthine site. Residue 128-132 (ANGQA) participates in 5-phospho-alpha-D-ribose 1-diphosphate binding. Residue lysine 156 participates in xanthine binding.

This sequence belongs to the purine/pyrimidine phosphoribosyltransferase family. Xpt subfamily. As to quaternary structure, homodimer.

The protein resides in the cytoplasm. The catalysed reaction is XMP + diphosphate = xanthine + 5-phospho-alpha-D-ribose 1-diphosphate. It participates in purine metabolism; XMP biosynthesis via salvage pathway; XMP from xanthine: step 1/1. Converts the preformed base xanthine, a product of nucleic acid breakdown, to xanthosine 5'-monophosphate (XMP), so that it can be reused for RNA or DNA synthesis. The protein is Xanthine phosphoribosyltransferase (xpt) of Bacillus subtilis (strain 168).